A 341-amino-acid chain; its full sequence is MENAIRSLQQEISEYELASIKDIEAFRLRYTVRKGLIAGLFGQLKSVLPADKPRMGQLLNQLRQTADDKLAAATAELASAESKTEPKLDLTLPGRRTFIGSEHPVQKVLGEMKGIFSSMGFSIATGPELELDRYNFDLLNFPPDHPARDMQDTFFITRGNANGDVLLRTHTSPVQIRVMLDQKPPIRVICPGKVYRNEAISSRSYCVFHQLEGLYIDKGVSFADLKATIFSFAHQMFGSDVKLRFRPSFFPFTEPSAEVDVSCYLCGGKGCRVCKKSGWLEIMGCGMVHPNVMRNSGIDPEKWSGYAFGMGVDRTVLLRYKIDDIRLLFENDVRMLRQFPA.

Position 254 (E254) interacts with Mg(2+).

Belongs to the class-II aminoacyl-tRNA synthetase family. Phe-tRNA synthetase alpha subunit type 1 subfamily. As to quaternary structure, tetramer of two alpha and two beta subunits. The cofactor is Mg(2+).

Its subcellular location is the cytoplasm. It catalyses the reaction tRNA(Phe) + L-phenylalanine + ATP = L-phenylalanyl-tRNA(Phe) + AMP + diphosphate + H(+). The polypeptide is Phenylalanine--tRNA ligase alpha subunit (Chlorobium phaeobacteroides (strain DSM 266 / SMG 266 / 2430)).